The primary structure comprises 718 residues: Exostosin-2 (718 aa).

The Cytoplasmic portion of the chain corresponds to 1–25 (MCASVKYNIRGPALIPRMKTKHRIY). A helical; Signal-anchor for type II membrane protein transmembrane segment spans residues 26-46 (YITLFSIVLLGLIATGMFQFW). Residues 47 to 718 (PHSIESSNDW…LKSFPNIGSL (672 aa)) are Lumenal-facing. 4 disulfides stabilise this stretch: Cys85-Cys90, Cys96-Cys151, Cys286-Cys300, and Cys318-Cys339. Asn288 is a glycosylation site (N-linked (GlcNAc...) asparagine). UDP is bound by residues Leu461, Arg465, Asn490, and Asn517. Arg465, Asn490, Asn517, Arg522, Asp538, Asp539, and Asp540 together coordinate UDP-N-acetyl-alpha-D-glucosamine. Residues Asp538 and Asp539 each coordinate UDP. Asp540 lines the Mn(2+) pocket. A protein is bound by residues Tyr582 and Ser584. A disulfide bridge links Cys626 with Cys676. Positions 627 and 628 each coordinate UDP-N-acetyl-alpha-D-glucosamine. Residue Asn637 is glycosylated (N-linked (GlcNAc...) asparagine). A protein contacts are provided by Lys651 and Lys653. Residue Arg673 coordinates UDP-N-acetyl-alpha-D-glucosamine.

This sequence belongs to the glycosyltransferase 47 family. In terms of assembly, part of the heparan sulfate polymerase, a dimeric complex composed of EXT1 and EXT2. Could also form homooligomeric complexes. Interacts with NDST1. Interacts with GALNT5. Requires Mn(2+) as cofactor. N-glycosylated at Asn-637. Post-translationally, a soluble form is generated by proteolytic processing. As to expression, widely expressed.

It localises to the golgi apparatus membrane. The protein resides in the golgi apparatus. The protein localises to the cis-Golgi network membrane. Its subcellular location is the endoplasmic reticulum membrane. It is found in the secreted. The catalysed reaction is 3-O-{[(1-&gt;4)-beta-D-GlcA-(1-&gt;4)-alpha-D-GlcNAc](n)-(1-&gt;4)-beta-D-GlcA-(1-&gt;3)-beta-D-Gal-(1-&gt;3)-beta-D-Gal-(1-&gt;4)-beta-D-Xyl}-L-seryl-[protein] + UDP-N-acetyl-alpha-D-glucosamine = 3-O-{alpha-D-GlcNAc-[(1-&gt;4)-beta-D-GlcA-(1-&gt;4)-alpha-D-GlcNAc](n)-(1-&gt;4)-beta-D-GlcA-(1-&gt;3)-beta-D-Gal-(1-&gt;3)-beta-D-Gal-(1-&gt;4)-beta-D-Xyl}-L-seryl-[protein] + UDP + H(+). Its pathway is protein modification; protein glycosylation. Its function is as follows. Glycosyltransferase forming with EXT1 the heterodimeric heparan sulfate polymerase which catalyzes the elongation of the heparan sulfate glycan backbone. Glycan backbone extension consists in the alternating transfer of (1-&gt;4)-beta-D-GlcA and (1-&gt;4)-alpha-D-GlcNAc residues from their respective UDP-sugar donors. Both EXT1 and EXT2 are required for the full activity of the polymerase since EXT1 bears the N-acetylglucosaminyl-proteoglycan 4-beta-glucuronosyltransferase activity within the complex while EXT2 carries the glucuronosyl-N-acetylglucosaminyl-proteoglycan 4-alpha-N-acetylglucosaminyltransferase activity. Heparan sulfate proteoglycans are ubiquitous components of the extracellular matrix and play an important role in tissue homeostasis and signaling. This Homo sapiens (Human) protein is Exostosin-2.